A 752-amino-acid polypeptide reads, in one-letter code: Glutamate carboxypeptidase 2 (752 aa).

At 1 to 22 (MWNALQDRDSAEVLGHRQRWLR) the chain is on the cytoplasmic side. S10 is subject to Phosphoserine. Residues 23–44 (VGTLVLALTGTFLIGFLFGWFI) form a helical; Signal-anchor for type II membrane protein membrane-spanning segment. The Extracellular segment spans residues 45–752 (KPSNEATGNV…AAAETLREVA (708 aa)). N78, N123, and N155 each carry an N-linked (GlcNAc...) asparagine glycan. Residues R212 and N259 each contribute to the substrate site. Ca(2+)-binding residues include T271 and Y274. The interval 276-589 (ANEHAYRHEL…QVRGAMVFEL (314 aa)) is NAALADase. A glycan (N-linked (GlcNAc...) asparagine) is linked at N338. Zn(2+) contacts are provided by H379 and D389. E426 is a binding site for substrate. The active-site Nucleophile; for NAALADase activity is the E426. Residue E427 coordinates Zn(2+). Positions 435 and 438 each coordinate Ca(2+). D455 is a Zn(2+) binding site. N461 and N478 each carry an N-linked (GlcNAc...) asparagine glycan. Substrate is bound by residues 519-520 (SG), N521, 536-538 (RAR), Y554, and 554-555 (YH). H555 lines the Zn(2+) pocket. N-linked (GlcNAc...) asparagine glycosylation occurs at N615. Catalysis depends on S630, which acts as the Charge relay system. N640 carries N-linked (GlcNAc...) asparagine glycosylation. Active-site charge relay system residues include D668 and H691. 701 to 702 (KY) lines the substrate pocket. N722 is a glycosylation site (N-linked (GlcNAc...) asparagine).

It belongs to the peptidase M28 family. M28B subfamily. Homodimer. The cofactor is Zn(2+). As to expression, expressed predominantly in the hippocampal region of the brain and in kidney. Lower levels in the ovary, testis and mandibular gland.

The protein resides in the cell membrane. The enzyme catalyses Release of an unsubstituted, C-terminal glutamyl residue, typically from Ac-Asp-Glu or folylpoly-gamma-glutamates.. With respect to regulation, the NAALADase and folate hydrolase activities are inhibited by quisqualic acid. Its function is as follows. Has both folate hydrolase and N-acetylated-alpha-linked-acidic dipeptidase (NAALADase) activity. Has a preference for tri-alpha-glutamate peptides. In the intestine, required for the uptake of folate. In the brain, modulates excitatory neurotransmission through the hydrolysis of the neuropeptide, N-aceylaspartylglutamate (NAAG), thereby releasing glutamate. Also exhibits a dipeptidyl-peptidase IV type activity. In vitro, cleaves Gly-Pro-AMC. This Mus musculus (Mouse) protein is Glutamate carboxypeptidase 2 (Folh1).